We begin with the raw amino-acid sequence, 745 residues long: uncharacterized protein (745 aa).

The region spanning 158 to 256 (NQVCDYIELH…HQTPKQYRGD (99 aa)) is the HTH araC/xylS-type domain. 2 DNA-binding regions (H-T-H motif) span residues 175-196 (SELS…TESL) and 223-246 (ITDI…KHFT).

This is an uncharacterized protein from Staphylococcus aureus (strain COL).